Here is a 557-residue protein sequence, read N- to C-terminus: Dihydroxy-acid dehydratase (557 aa).

Asp78 provides a ligand contact to Mg(2+). Cys119 is a binding site for [2Fe-2S] cluster. Positions 120 and 121 each coordinate Mg(2+). Lys121 is modified (N6-carboxylysine). A [2Fe-2S] cluster-binding site is contributed by Cys192. Glu443 contributes to the Mg(2+) binding site. Ser469 functions as the Proton acceptor in the catalytic mechanism.

The protein belongs to the IlvD/Edd family. In terms of assembly, homodimer. Requires [2Fe-2S] cluster as cofactor. It depends on Mg(2+) as a cofactor.

The catalysed reaction is (2R)-2,3-dihydroxy-3-methylbutanoate = 3-methyl-2-oxobutanoate + H2O. It catalyses the reaction (2R,3R)-2,3-dihydroxy-3-methylpentanoate = (S)-3-methyl-2-oxopentanoate + H2O. It functions in the pathway amino-acid biosynthesis; L-isoleucine biosynthesis; L-isoleucine from 2-oxobutanoate: step 3/4. Its pathway is amino-acid biosynthesis; L-valine biosynthesis; L-valine from pyruvate: step 3/4. In terms of biological role, functions in the biosynthesis of branched-chain amino acids. Catalyzes the dehydration of (2R,3R)-2,3-dihydroxy-3-methylpentanoate (2,3-dihydroxy-3-methylvalerate) into 2-oxo-3-methylpentanoate (2-oxo-3-methylvalerate) and of (2R)-2,3-dihydroxy-3-methylbutanoate (2,3-dihydroxyisovalerate) into 2-oxo-3-methylbutanoate (2-oxoisovalerate), the penultimate precursor to L-isoleucine and L-valine, respectively. The polypeptide is Dihydroxy-acid dehydratase (Persephonella marina (strain DSM 14350 / EX-H1)).